The following is a 653-amino-acid chain: Macrolide export ATP-binding/permease protein MacB (653 aa).

The region spanning 6–244 (IELQGVSRSY…PPLLPCSAHP (239 aa)) is the ABC transporter domain. 42 to 49 (GSSGSGKS) lines the ATP pocket. Helical transmembrane passes span 275 to 295 (LLTM…VGLG), 525 to 545 (FSVL…LGVM), 576 to 596 (FLIE…LLAL), and 616 to 636 (WPAV…FGYW).

This sequence belongs to the ABC transporter superfamily. Macrolide exporter (TC 3.A.1.122) family. In terms of assembly, homodimer. Part of the tripartite efflux system MacAB-TolC, which is composed of an inner membrane transporter, MacB, a periplasmic membrane fusion protein, MacA, and an outer membrane component, TolC. The complex forms a large protein conduit and can translocate molecules across both the inner and outer membranes. Interacts with MacA.

It is found in the cell inner membrane. Its function is as follows. Part of the tripartite efflux system MacAB-TolC. MacB is a non-canonical ABC transporter that contains transmembrane domains (TMD), which form a pore in the inner membrane, and an ATP-binding domain (NBD), which is responsible for energy generation. Confers resistance against macrolides. The sequence is that of Macrolide export ATP-binding/permease protein MacB from Sodalis glossinidius (strain morsitans).